Here is a 267-residue protein sequence, read N- to C-terminus: tRNA pseudouridine synthase A (267 aa).

The active-site Nucleophile is the Asp54. Substrate is bound at residue Tyr114.

It belongs to the tRNA pseudouridine synthase TruA family. Homodimer.

The enzyme catalyses uridine(38/39/40) in tRNA = pseudouridine(38/39/40) in tRNA. Functionally, formation of pseudouridine at positions 38, 39 and 40 in the anticodon stem and loop of transfer RNAs. This Tropheryma whipplei (strain Twist) (Whipple's bacillus) protein is tRNA pseudouridine synthase A.